The following is a 295-amino-acid chain: Protease HtpX (295 aa).

The next 2 helical transmembrane spans lie at 4-24 (ILLF…TLSL) and 41-61 (SQLL…SLFI). His-147 serves as a coordination point for Zn(2+). Glu-148 is an active-site residue. Residue His-151 coordinates Zn(2+). 2 consecutive transmembrane segments (helical) span residues 158–178 (VTLA…ARII) and 199–219 (IATI…VMWF). Glu-224 is a binding site for Zn(2+).

This sequence belongs to the peptidase M48B family. It depends on Zn(2+) as a cofactor.

It localises to the cell inner membrane. The protein is Protease HtpX of Pseudomonas fluorescens (strain Pf0-1).